A 142-amino-acid chain; its full sequence is Putative regulator of rDNA transcription protein 16 (142 aa).

3 helical membrane-spanning segments follow: residues 19–39 (ILLT…VMVA), 84–104 (FLLF…AIFL), and 111–131 (SIFI…GLCH).

Its subcellular location is the membrane. Its function is as follows. Identified in a screen for mutants with decreased levels of rDNA transcription. The protein is Putative regulator of rDNA transcription protein 16 (RRT16) of Saccharomyces cerevisiae (strain ATCC 204508 / S288c) (Baker's yeast).